The primary structure comprises 123 residues: Protein Wnt-3a (123 aa).

Residue serine 1 is the site of O-palmitoleoyl serine attachment. Cysteine 89 and cysteine 104 form a disulfide bridge. Asparagine 90 carries an N-linked (GlcNAc...) asparagine glycan.

The protein belongs to the Wnt family. Disulfide bonds have critical and distinct roles in secretion and activity. Loss of each conserved cysteine results in high molecular weight oxidized Wnt oligomers, which are formed through inter-Wnt disulfide bonding. In terms of processing, palmitoleoylation is required for efficient binding to frizzled receptors. Depalmitoleoylation leads to Wnt signaling pathway inhibition.

Its subcellular location is the secreted. It is found in the extracellular space. The protein resides in the extracellular matrix. Functionally, ligand for members of the frizzled family of seven transmembrane receptors. Functions in the canonical Wnt signaling pathway that results in activation of transcription factors of the TCF/LEF family. Required for normal embryonic mesoderm development and formation of caudal somites. Required for normal morphogenesis of the developing neural tube. The chain is Protein Wnt-3a (WNT-3A) from Pituophis melanoleucus (Pine snake).